Consider the following 315-residue polypeptide: Tyrosine recombinase XerC (315 aa).

The 92-residue stretch at 13-104 (ADLAAAREEW…GVRSLLRHLE (92 aa)) folds into the Core-binding (CB) domain. Positions 125-309 (SLPKPLTADD…DTQRLLEVYD (185 aa)) constitute a Tyr recombinase domain. Active-site residues include Arg168, Lys193, His261, Arg264, and His287. The O-(3'-phospho-DNA)-tyrosine intermediate role is filled by Tyr296.

The protein belongs to the 'phage' integrase family. XerC subfamily. Forms a cyclic heterotetrameric complex composed of two molecules of XerC and two molecules of XerD.

Its subcellular location is the cytoplasm. Functionally, site-specific tyrosine recombinase, which acts by catalyzing the cutting and rejoining of the recombining DNA molecules. The XerC-XerD complex is essential to convert dimers of the bacterial chromosome into monomers to permit their segregation at cell division. It also contributes to the segregational stability of plasmids. The protein is Tyrosine recombinase XerC of Brucella melitensis biotype 1 (strain ATCC 23456 / CCUG 17765 / NCTC 10094 / 16M).